A 498-amino-acid chain; its full sequence is Acetyl-coenzyme A carboxylase carboxyl transferase subunit beta, chloroplastic (498 aa).

A disordered region spans residues 36 to 59 (SVNEDPIINDMDKDIPSGSDSDNS). Positions 231–498 (LWVQCENCYG…FFPLNQNSIK (268 aa)) constitute a CoA carboxyltransferase N-terminal domain. C235, C238, C254, and C257 together coordinate Zn(2+). The C4-type zinc-finger motif lies at 235 to 257 (CENCYGLNYKRFLKSKMNICEHC).

This sequence belongs to the AccD/PCCB family. In terms of assembly, acetyl-CoA carboxylase is a heterohexamer composed of biotin carboxyl carrier protein, biotin carboxylase and 2 subunits each of ACCase subunit alpha and ACCase plastid-coded subunit beta (accD). It depends on Zn(2+) as a cofactor.

It localises to the plastid. It is found in the chloroplast stroma. It carries out the reaction N(6)-carboxybiotinyl-L-lysyl-[protein] + acetyl-CoA = N(6)-biotinyl-L-lysyl-[protein] + malonyl-CoA. It functions in the pathway lipid metabolism; malonyl-CoA biosynthesis; malonyl-CoA from acetyl-CoA: step 1/1. Component of the acetyl coenzyme A carboxylase (ACC) complex. Biotin carboxylase (BC) catalyzes the carboxylation of biotin on its carrier protein (BCCP) and then the CO(2) group is transferred by the transcarboxylase to acetyl-CoA to form malonyl-CoA. The protein is Acetyl-coenzyme A carboxylase carboxyl transferase subunit beta, chloroplastic of Morus indica (Mulberry).